The sequence spans 481 residues: Zygotic gap protein knirps (481 aa).

Positions 2-78 (NQTCKVCGEP…VGMSKGGSRY (77 aa)) form a DNA-binding region, nuclear receptor. NR C4-type zinc fingers lie at residues 5–25 (CKVC…CEGC) and 42–66 (CKND…LRKC). Low complexity-rich tracts occupy residues 100–111 (AAAGKAPGHATG), 127–148 (QQQQ…QQQQ), 245–264 (TPPT…AASP), 316–335 (SHSS…SPLS), and 420–440 (TTNS…TSST). Disordered stretches follow at residues 100-161 (AAAG…GYTG), 231-294 (SVDS…PHTI), 308-336 (LLPG…PLSF), and 420-442 (TTNS…STEA).

It belongs to the nuclear hormone receptor family. NR0 subfamily.

It localises to the nucleus. Its function is as follows. Transcriptional repressor. Binds to multiple sites in the eve stripe 3 enhancer element. Plays an essential role in the segmentation process both by refining the expression patterns of gap genes and by establishing pair-rules stripes of gene expression. The polypeptide is Zygotic gap protein knirps (kni) (Drosophila virilis (Fruit fly)).